Reading from the N-terminus, the 149-residue chain is Large ribosomal subunit protein uL15 (149 aa).

Residues 30-63 are disordered; the sequence is GLGKTAGRGHKGSFARKGGGKIKPGFEGGQTPMQ. A compositionally biased stretch (basic residues) spans 36–49; that stretch reads GRGHKGSFARKGGG.

This sequence belongs to the universal ribosomal protein uL15 family. In terms of assembly, part of the 50S ribosomal subunit.

Functionally, binds to the 23S rRNA. The chain is Large ribosomal subunit protein uL15 from Xylella fastidiosa (strain 9a5c).